We begin with the raw amino-acid sequence, 299 residues long: Taste receptor type 2 member 4 (299 aa).

Residues 1 to 9 (MLRLFYFSA) lie on the Extracellular side of the membrane. A helical membrane pass occupies residues 10–30 (IIASVILNFVGIIMNLFITVV). At 31–46 (NCKTWVKSHRISSSDR) the chain is on the cytoplasmic side. A helical transmembrane segment spans residues 47–67 (ILFSLGITRFLMLGLFLVNTI). Over 68–81 (YFVSSNTERSVYLS) the chain is Extracellular. A helical transmembrane segment spans residues 82–102 (AFFVLCFMFLDSSSVWFVTLL). Topologically, residues 103-131 (NILYCVKITNFQHSVFLLLKRNISPKIPR) are cytoplasmic. The helical transmembrane segment at 132 to 152 (LLLACVLISAFTTCLYITLSQ) threads the bilayer. Topologically, residues 153–172 (ASPFPELVTTRNNTSFNISE) are extracellular. N-linked (GlcNAc...) asparagine glycans are attached at residues Asn-164, Asn-165, and Asn-169. The chain crosses the membrane as a helical span at residues 173–193 (GILSLVVSLVLSSSLQFIINV). Topologically, residues 194–230 (TSASLLIHSLRRHIQKMQKNATGFWNPQTEAHVGAMK) are cytoplasmic. A helical membrane pass occupies residues 231-251 (LMVYFLILYIPYSVATLVQYL). At 252 to 262 (PFYAGMDMGTK) the chain is on the extracellular side. Residues 263–283 (SICLIFATLYSPGHSVLIIIT) form a helical membrane-spanning segment. Over 284–299 (HPKLKTTAKKILCFKK) the chain is Cytoplasmic.

Belongs to the G-protein coupled receptor T2R family. As to expression, expressed in subsets of taste receptor cells of the tongue and palate epithelium and exclusively in gustducin-positive cells. Expressed on airway ciliated epithelium.

The protein localises to the membrane. Its subcellular location is the cell projection. The protein resides in the cilium membrane. Its function is as follows. Gustducin-coupled receptor for denatonium and N(6)-propyl-2-thiouracil implicated in the perception of bitter compounds in the oral cavity and the gastrointestinal tract. Signals through PLCB2 and the calcium-regulated cation channel TRPM5. In airway epithelial cells, binding of denatonium increases the intracellular calcium ion concentration and stimulates ciliary beat frequency. The sequence is that of Taste receptor type 2 member 4 (TAS2R4) from Homo sapiens (Human).